We begin with the raw amino-acid sequence, 293 residues long: Small ribosomal subunit protein uS5 (293 aa).

Residues 1 to 56 (MADDAGAAGGPGGPGGPGMGNRGGFRGGFGSGIRGRGRGRGRGRGRGRGARGGKAE) form a disordered region. Ala-2 carries the post-translational modification N-acetylalanine. Residues 7–34 (AAGGPGGPGGPGMGNRGGFRGGFGSGIR) are compositionally biased toward gly residues. Positions 35-51 (GRGRGRGRGRGRGRGAR) are enriched in basic residues. Residues Lys-54 and Lys-58 each participate in a glycyl lysine isopeptide (Lys-Gly) (interchain with G-Cter in ubiquitin) cross-link. The region spanning 102-165 (LKDEVLKIMP…ILAKLSIVPV (64 aa)) is the S5 DRBM domain. Thr-252 carries the post-translational modification Phosphothreonine. N6-acetyllysine is present on Lys-263. Ser-264 carries the post-translational modification Phosphoserine. Thr-270 is modified (phosphothreonine). Position 275 is an N6-acetyllysine; alternate (Lys-275). A Glycyl lysine isopeptide (Lys-Gly) (interchain with G-Cter in SUMO1); alternate cross-link involves residue Lys-275. Residue Lys-275 forms a Glycyl lysine isopeptide (Lys-Gly) (interchain with G-Cter in SUMO2); alternate linkage. Residue Lys-275 forms a Glycyl lysine isopeptide (Lys-Gly) (interchain with G-Cter in ubiquitin); alternate linkage. Residue Ser-281 is modified to Phosphoserine.

It belongs to the universal ribosomal protein uS5 family. As to quaternary structure, component of the small ribosomal subunit. Interacts with zinc finger protein ZNF277 (via zinc-finger domains); the interaction is direct; the interaction is extra-ribosomal. Interaction with ZNF277 competes with the binding of RPS2 to protein arginine methyltransferase PRMT3. In terms of processing, citrullinated by PADI4 in the Arg/Gly-rich region. Asymmetric arginine dimethylation by PRMT3 occurs at multiple sites in the Arg/Gly-rich region. Post-translationally, monoubiquitinated at Lys-54 and Lys-58 by RNF10 when a ribosome has stalled during translation, leading to its degradation by the proteasome. Deubiquitinated at Lys-54 and Lys-58 by USP10, preventing degradation by the proteasome and promoting 40S ribosome subunit recycling following ribosome dissociation.

The protein localises to the cytoplasm. The protein resides in the nucleus. It is found in the nucleolus. Its function is as follows. Component of the ribosome, a large ribonucleoprotein complex responsible for the synthesis of proteins in the cell. The small ribosomal subunit (SSU) binds messenger RNAs (mRNAs) and translates the encoded message by selecting cognate aminoacyl-transfer RNA (tRNA) molecules. The large subunit (LSU) contains the ribosomal catalytic site termed the peptidyl transferase center (PTC), which catalyzes the formation of peptide bonds, thereby polymerizing the amino acids delivered by tRNAs into a polypeptide chain. The nascent polypeptides leave the ribosome through a tunnel in the LSU and interact with protein factors that function in enzymatic processing, targeting, and the membrane insertion of nascent chains at the exit of the ribosomal tunnel. Plays a role in the assembly and function of the 40S ribosomal subunit. Mutations in this protein affects the control of translational fidelity. Involved in nucleolar processing of pre-18S ribosomal RNA and ribosome assembly. The polypeptide is Small ribosomal subunit protein uS5 (RPS2) (Homo sapiens (Human)).